A 315-amino-acid chain; its full sequence is MLEIEKPKIECIEMTENGSYGKFVVEPLERGYGITLGNALRRILLSSLPGVAVNSIKIENVLHEFSTVKGVKEDVTEIILNIKLLALKMTGEGPKTIYIDAKGPGVVTAADIKTDSDVEIINKDLHIATLDDDGKLYIEMTVDRGRGYVSQNRNKVEGMPIGTIPIDSIYTPVKRVNFTVANTRVGQITDYDKLTLEIWTNGTIMPDDAISLSAKILIEHFKLFMTLTDHADDVEIMVEKEEDKKEKVLEMTIEELDLSVRSYNCLKRAGINTVQELTERTVEDMMKVRNLGRKSLEEVEQKLEALELGLKQSEE.

Residues Met-1–Thr-228 are alpha N-terminal domain (alpha-NTD). The tract at residues Lys-245–Glu-315 is alpha C-terminal domain (alpha-CTD).

The protein belongs to the RNA polymerase alpha chain family. As to quaternary structure, homodimer. The RNAP catalytic core consists of 2 alpha, 1 beta, 1 beta' and 1 omega subunit. When a sigma factor is associated with the core the holoenzyme is formed, which can initiate transcription.

The enzyme catalyses RNA(n) + a ribonucleoside 5'-triphosphate = RNA(n+1) + diphosphate. Its function is as follows. DNA-dependent RNA polymerase catalyzes the transcription of DNA into RNA using the four ribonucleoside triphosphates as substrates. This Clostridium tetani (strain Massachusetts / E88) protein is DNA-directed RNA polymerase subunit alpha.